The primary structure comprises 179 residues: Ribosome maturation factor RimM (179 aa).

Residues 100 to 176 (KEEFHLLELI…FVIINPPNGL (77 aa)) form the PRC barrel domain.

This sequence belongs to the RimM family. As to quaternary structure, binds ribosomal protein uS19.

It localises to the cytoplasm. In terms of biological role, an accessory protein needed during the final step in the assembly of 30S ribosomal subunit, possibly for assembly of the head region. Essential for efficient processing of 16S rRNA. May be needed both before and after RbfA during the maturation of 16S rRNA. It has affinity for free ribosomal 30S subunits but not for 70S ribosomes. The chain is Ribosome maturation factor RimM from Prochlorococcus marinus (strain MIT 9301).